A 228-amino-acid chain; its full sequence is MHIEKLDFENSPYLGVYGTATDRVALIREGLGEKKLEVLREVLKVPLIETSIMKSRIVGVFAAGNSNAIVVPWYIWDAELEHIQNELNELDIDMRIEPFQSTLTAFGNLILANDKAALISVKFTREEAKKLEDILGVEVERGMIGDYHAVGSVGVVTNRGGLVHPEATDEELEWLRDLFKVDIYVGTANMGVPFVGSCMLANSHGVVVGHLTTGPEIVKIEEALGFLD.

The protein belongs to the eIF-6 family.

In terms of biological role, binds to the 50S ribosomal subunit and prevents its association with the 30S ribosomal subunit to form the 70S initiation complex. The protein is Translation initiation factor 6 of Thermococcus onnurineus (strain NA1).